A 58-amino-acid polypeptide reads, in one-letter code: U7-ctenitoxin-Pr1a (58 aa).

Cystine bridges form between Cys-2-Cys-16, Cys-9-Cys-22, Cys-13-Cys-48, Cys-15-Cys-40, Cys-18-Cys-55, and Cys-24-Cys-38.

In terms of tissue distribution, expressed by the venom gland.

It is found in the secreted. Probable neurotoxin. The sequence is that of U7-ctenitoxin-Pr1a from Phoneutria reidyi (Brazilian Amazonian armed spider).